A 198-amino-acid chain; its full sequence is Ribonuclease HII (198 aa).

The 188-residue stretch at 11-198 folds into the RNase H type-2 domain; sequence NLIAGVDEVG…GPVKRVLGLV (188 aa). Residues D17, E18, and D109 each contribute to the a divalent metal cation site.

The protein belongs to the RNase HII family. Requires Mn(2+) as cofactor. Mg(2+) serves as cofactor.

The protein localises to the cytoplasm. The catalysed reaction is Endonucleolytic cleavage to 5'-phosphomonoester.. Functionally, endonuclease that specifically degrades the RNA of RNA-DNA hybrids. This chain is Ribonuclease HII, found in Yersinia pseudotuberculosis serotype O:1b (strain IP 31758).